The following is a 360-amino-acid chain: Photosystem II protein D1 2 (360 aa).

3 helical membrane-spanning segments follow: residues 29-46 (YVGWFGVLMIPTLLTATT), 118-133 (HFLIGVFCYMGREWEL), and 142-156 (WICVAFSAPVAAATA). Residue H118 coordinates chlorophyll a. Residue Y126 coordinates pheophytin a. Residues D170 and E189 each contribute to the [CaMn4O5] cluster site. Residues 197–218 (FHMLGVAGVFGGSLFSAMHGSL) form a helical membrane-spanning segment. Position 198 (H198) interacts with chlorophyll a. Residues H215 and 264–265 (SF) contribute to the a quinone site. H215 is a binding site for Fe cation. H272 is a Fe cation binding site. Residues 274 to 288 (FLGAWPVVGIWFTAL) form a helical membrane-spanning segment. Residues H332, E333, D342, and A344 each contribute to the [CaMn4O5] cluster site. Positions 345-360 (AGEQAPVALQAPAING) are excised as a propeptide.

Belongs to the reaction center PufL/M/PsbA/D family. In terms of assembly, PSII is composed of 1 copy each of membrane proteins PsbA, PsbB, PsbC, PsbD, PsbE, PsbF, PsbH, PsbI, PsbJ, PsbK, PsbL, PsbM, PsbT, PsbX, PsbY, PsbZ, Psb30/Ycf12, peripheral proteins PsbO, CyanoQ (PsbQ), PsbU, PsbV and a large number of cofactors. It forms dimeric complexes. The cofactor is The D1/D2 heterodimer binds P680, chlorophylls that are the primary electron donor of PSII, and subsequent electron acceptors. It shares a non-heme iron and each subunit binds pheophytin, quinone, additional chlorophylls, carotenoids and lipids. D1 provides most of the ligands for the Mn4-Ca-O5 cluster of the oxygen-evolving complex (OEC). There is also a Cl(-1) ion associated with D1 and D2, which is required for oxygen evolution. The PSII complex binds additional chlorophylls, carotenoids and specific lipids.. Tyr-161 forms a radical intermediate that is referred to as redox-active TyrZ, YZ or Y-Z. In terms of processing, C-terminally processed by CtpA; processing is essential to allow assembly of the oxygen-evolving complex and thus photosynthetic growth.

The protein resides in the cellular thylakoid membrane. It carries out the reaction 2 a plastoquinone + 4 hnu + 2 H2O = 2 a plastoquinol + O2. Its function is as follows. Photosystem II (PSII) is a light-driven water:plastoquinone oxidoreductase that uses light energy to abstract electrons from H(2)O, generating O(2) and a proton gradient subsequently used for ATP formation. It consists of a core antenna complex that captures photons, and an electron transfer chain that converts photonic excitation into a charge separation. The D1/D2 (PsbA/PsbD) reaction center heterodimer binds P680, the primary electron donor of PSII as well as several subsequent electron acceptors. This is Photosystem II protein D1 2 from Picosynechococcus sp. (strain ATCC 27264 / PCC 7002 / PR-6) (Agmenellum quadruplicatum).